We begin with the raw amino-acid sequence, 212 residues long: Thymidylate kinase (212 aa).

9 to 16 (GIDGCGKT) contacts ATP.

The protein belongs to the thymidylate kinase family.

The catalysed reaction is dTMP + ATP = dTDP + ADP. Phosphorylation of dTMP to form dTDP in both de novo and salvage pathways of dTTP synthesis. This Synechococcus sp. (strain CC9311) protein is Thymidylate kinase.